The chain runs to 564 residues: Myb-like protein F (564 aa).

Disordered stretches follow at residues 22-107 (YNNS…NYNN), 122-203 (NYNN…YNGG), and 310-410 (NYNN…TKKY). Low complexity predominate over residues 23-79 (NNSNHYNDNNDNNNNNNNNNNDNNNNDNNNNNNNNNNSIINNESDNESNGTSNNYND). Positions 82–96 (NDNHHHHQDDEHHGN) are enriched in basic and acidic residues. Composition is skewed to low complexity over residues 97-107 (GNDNDNENYNN), 135-173 (EINS…NNSK), 193-203 (NNNNNNKYNGG), and 310-364 (NYNN…NSSN). Basic and acidic residues predominate over residues 365 to 409 (KEYKEKEYKEKEYKEKEFKESKDSSLKRKSSSDDDGDDSGRDTKK). The SANT domain maps to 412–464 (PGRTVWTLEEEELYKEVFNHYGKNWKKIKTHFPDKSKSQVTSHGQYLIKINKL). A compositionally biased stretch (low complexity) spans 519 to 556 (NNENTNDNNNHNNNNYNDNNNNSNNNNNFNNSNNNNTN). The tract at residues 519–564 (NNENTNDNNNHNNNNYNDNNNNSNNNNNFNNSNNNNTNKFIDEDDD) is disordered.

The protein resides in the nucleus. The polypeptide is Myb-like protein F (mybF) (Dictyostelium discoideum (Social amoeba)).